Reading from the N-terminus, the 313-residue chain is Ribosomal RNA small subunit methyltransferase H (313 aa).

S-adenosyl-L-methionine-binding positions include 37–39, aspartate 57, phenylalanine 83, aspartate 104, and glutamine 111; that span reads GGH.

Belongs to the methyltransferase superfamily. RsmH family.

The protein localises to the cytoplasm. The catalysed reaction is cytidine(1402) in 16S rRNA + S-adenosyl-L-methionine = N(4)-methylcytidine(1402) in 16S rRNA + S-adenosyl-L-homocysteine + H(+). Functionally, specifically methylates the N4 position of cytidine in position 1402 (C1402) of 16S rRNA. The sequence is that of Ribosomal RNA small subunit methyltransferase H from Mycoplasmoides gallisepticum (strain R(low / passage 15 / clone 2)) (Mycoplasma gallisepticum).